Reading from the N-terminus, the 141-residue chain is Large ribosomal subunit protein uL11 (141 aa).

This sequence belongs to the universal ribosomal protein uL11 family. As to quaternary structure, part of the ribosomal stalk of the 50S ribosomal subunit. Interacts with L10 and the large rRNA to form the base of the stalk. L10 forms an elongated spine to which L12 dimers bind in a sequential fashion forming a multimeric L10(L12)X complex. Post-translationally, one or more lysine residues are methylated.

Forms part of the ribosomal stalk which helps the ribosome interact with GTP-bound translation factors. This Parasynechococcus marenigrum (strain WH8102) protein is Large ribosomal subunit protein uL11.